The sequence spans 483 residues: Glutamate--tRNA ligase 1 (483 aa).

The short motif at 9–19 is the 'HIGH' region element; that stretch reads PSPTGFLHIGG. The 'KMSKS' region signature appears at 238–242; it reads KLSKR. ATP is bound at residue lysine 241.

It belongs to the class-I aminoacyl-tRNA synthetase family. Glutamate--tRNA ligase type 1 subfamily. In terms of assembly, monomer.

It localises to the cytoplasm. The catalysed reaction is tRNA(Glu) + L-glutamate + ATP = L-glutamyl-tRNA(Glu) + AMP + diphosphate. Functionally, catalyzes the attachment of glutamate to tRNA(Glu) in a two-step reaction: glutamate is first activated by ATP to form Glu-AMP and then transferred to the acceptor end of tRNA(Glu). This is Glutamate--tRNA ligase 1 from Bartonella henselae (strain ATCC 49882 / DSM 28221 / CCUG 30454 / Houston 1) (Rochalimaea henselae).